The sequence spans 83 residues: Sec-independent protein translocase protein TatA (83 aa).

The chain crosses the membrane as a helical span at residues 1–21 (MGGLSLPHLIVLALVVLILFG). Residues 34–83 (KGIKSFKQGMNDEDSKPVTPPPAQIPPASLQQTPPPAQPAPQPTSTDQAQ) form a disordered region. Residues 66-75 (TPPPAQPAPQ) are compositionally biased toward pro residues.

The protein belongs to the TatA/E family. As to quaternary structure, the Tat system comprises two distinct complexes: a TatABC complex, containing multiple copies of TatA, TatB and TatC subunits, and a separate TatA complex, containing only TatA subunits. Substrates initially bind to the TatABC complex, which probably triggers association of the separate TatA complex to form the active translocon.

The protein localises to the cell inner membrane. In terms of biological role, part of the twin-arginine translocation (Tat) system that transports large folded proteins containing a characteristic twin-arginine motif in their signal peptide across membranes. TatA could form the protein-conducting channel of the Tat system. The protein is Sec-independent protein translocase protein TatA of Novosphingobium aromaticivorans (strain ATCC 700278 / DSM 12444 / CCUG 56034 / CIP 105152 / NBRC 16084 / F199).